Consider the following 277-residue polypeptide: Large ribosomal subunit protein uL2 (277 aa).

2 disordered regions span residues 35 to 58 and 213 to 277; these read QPLPKRAGRNNQGKLTVRHHGGGH and WKGI…RKRK.

Belongs to the universal ribosomal protein uL2 family. Part of the 50S ribosomal subunit. Forms a bridge to the 30S subunit in the 70S ribosome.

Functionally, one of the primary rRNA binding proteins. Required for association of the 30S and 50S subunits to form the 70S ribosome, for tRNA binding and peptide bond formation. It has been suggested to have peptidyltransferase activity; this is somewhat controversial. Makes several contacts with the 16S rRNA in the 70S ribosome. This chain is Large ribosomal subunit protein uL2, found in Staphylococcus carnosus (strain TM300).